Here is a 429-residue protein sequence, read N- to C-terminus: Enolase (429 aa).

Residue glutamine 162 participates in (2R)-2-phosphoglycerate binding. Glutamate 204 functions as the Proton donor in the catalytic mechanism. The Mg(2+) site is built by aspartate 242, glutamate 289, and aspartate 316. Residues lysine 341, arginine 370, serine 371, and lysine 392 each contribute to the (2R)-2-phosphoglycerate site. Lysine 341 serves as the catalytic Proton acceptor.

Belongs to the enolase family. Mg(2+) serves as cofactor.

Its subcellular location is the cytoplasm. It is found in the secreted. It localises to the cell surface. It catalyses the reaction (2R)-2-phosphoglycerate = phosphoenolpyruvate + H2O. Its pathway is carbohydrate degradation; glycolysis; pyruvate from D-glyceraldehyde 3-phosphate: step 4/5. In terms of biological role, catalyzes the reversible conversion of 2-phosphoglycerate (2-PG) into phosphoenolpyruvate (PEP). It is essential for the degradation of carbohydrates via glycolysis. The protein is Enolase of Flavobacterium psychrophilum (strain ATCC 49511 / DSM 21280 / CIP 103535 / JIP02/86).